We begin with the raw amino-acid sequence, 188 residues long: Photosystem I assembly protein Ycf4 (188 aa).

2 helical membrane-spanning segments follow: residues 26 to 46 (IWWG…GLSS) and 70 to 90 (LLFY…TIIL).

This sequence belongs to the Ycf4 family.

It localises to the cellular thylakoid membrane. Seems to be required for the assembly of the photosystem I complex. This chain is Photosystem I assembly protein Ycf4, found in Rippkaea orientalis (strain PCC 8801 / RF-1) (Cyanothece sp. (strain PCC 8801)).